The primary structure comprises 109 residues: Putative double-stranded DNA mimic protein Ent638_2296 (109 aa).

Belongs to the putative dsDNA mimic protein family.

Functionally, may act as a double-stranded DNA (dsDNA) mimic. Probably regulates the activity of a dsDNA-binding protein. The protein is Putative double-stranded DNA mimic protein Ent638_2296 of Enterobacter sp. (strain 638).